The chain runs to 248 residues: Tyrosine recombinase XerD-like (248 aa).

The region spanning 1 to 72 is the Core-binding (CB) domain; the sequence is MKSYIEPFIA…TANQFLYYLY (72 aa). The Tyr recombinase domain maps to 85-248; the sequence is DTMKVMRTEK…PVTLEKYYKS (164 aa). Residues lysine 149 and arginine 213 contribute to the active site. Tyrosine 245 (O-(3'-phospho-DNA)-tyrosine intermediate) is an active-site residue.

This sequence belongs to the 'phage' integrase family. XerD-like subfamily.

The protein resides in the cytoplasm. Functionally, putative tyrosine recombinase. Not involved in the cutting and rejoining of the recombining DNA molecules on dif(SL) site. This Streptococcus pyogenes serotype M4 (strain MGAS10750) protein is Tyrosine recombinase XerD-like.